Reading from the N-terminus, the 318-residue chain is Pantothenate kinase (318 aa).

Residue G96 to S103 participates in ATP binding.

It belongs to the prokaryotic pantothenate kinase family.

The protein localises to the cytoplasm. It catalyses the reaction (R)-pantothenate + ATP = (R)-4'-phosphopantothenate + ADP + H(+). The protein operates within cofactor biosynthesis; coenzyme A biosynthesis; CoA from (R)-pantothenate: step 1/5. The polypeptide is Pantothenate kinase (Bradyrhizobium sp. (strain BTAi1 / ATCC BAA-1182)).